An 858-amino-acid chain; its full sequence is Tetratricopeptide repeat protein 7A (858 aa).

Phosphoserine is present on Ser-51. TPR repeat units lie at residues 121-157, 177-210, 414-447, 497-531, 533-565, and 566-599; these read CEAMLILGKLHYVEGSYRDAISMYARAGIDDMSMENK, ERLPNSIASRFRLTEREEEVITCFERASWIAQVF, FHLWYQVALSMVACGKSAYAVSLLRECVKLRPSD, YSLQATDATLKSKQDELHRKALQTLERAQQLAPSD, QVILYVSLQLALVRQISSAMEQLQEALKVRKDD, and AHALHLLALLFSAQKHHQHALDVVNMAITEHPEN. Residue Ser-182 is modified to Phosphoserine. Ser-647, Ser-678, Ser-679, and Ser-690 each carry phosphoserine. Residue Thr-693 is modified to Phosphothreonine. TPR repeat units follow at residues 745 to 778, 780 to 812, and 813 to 846; these read HSVLYMRGRLAEVKGNLEEAKQLYKEALTVNPDG, RIMHSLGLMLSRLGHKSLAQKVLRDAVERQSTC, and HEAWQGLGEVLQAQGQNEAAVDCFLTALELEASS.

In terms of assembly, component of a phosphatidylinositol 4-kinase (PI4K) complex, composed of PI4KA, EFR3 (EFR3A or EFR3B), TTC7 (TTC7A or TTC7B) and HYCC (HYCC1 or HYCC2). Interacts with PI4KA. Interaction with PI4KA is direct. Interacts with EFR3 (EFR3A or EFR3B), interaction is direct. Interacts with HYCC (HYCC1 or HYCC2), interaction is direct. Association with the PI4K complex is strongly reduced by TMEM150A. As to expression, expressed in epithelial cells of the intestine, thymus, and pancreas (at protein level).

Its subcellular location is the cytoplasm. The protein localises to the cell membrane. Functionally, component of a complex required to localize phosphatidylinositol 4-kinase (PI4K) to the plasma membrane. The complex acts as a regulator of phosphatidylinositol 4-phosphate (PtdIns(4)P) synthesis. In the complex, plays a central role in bridging PI4KA to EFR3B and HYCC1, via direct interactions. The sequence is that of Tetratricopeptide repeat protein 7A from Homo sapiens (Human).